The primary structure comprises 1758 residues: MKQRAALGPVLRLAILALLAVSYVQSQATCRDCSNRGCFCVGEKGSMGAPGPQGPPGTQGIRGFPGPEGLAGPKGLKGAQGPPGPVGIKGDRGAVGVPGFPGNDGGNGRPGEPGPPGAPGWDGCNGTDGAPGIPGRPGPPGMPGFPGPPGMDGLKGEPAIGYAGAPGEKGDGGMPGMPGLPGPSGRDGYPGEKGDRGDTGNAGPRGPPGEAGSPGNPGIGSIGPKGDPGDLGSVGPPGPPGPREFTGSGSIVGPRGNPGEKGDKGEPGEGGQRGYPGNGGLSGQPGLPGMKGEKGLSGPAGPRGKEGRPGNAGPPGFKGDRGLDGLGGIPGLPGQKGEAGYPGRDGPKGNSGPPGPPGGGTFNDGAPGPPGLPGRPGNPGPPGTDGYPGAPGPAGPIGNTGGPGLPGYPGNEGLPGPKGDKGDGGIPGAPGVSGPSGIPGLPGPKGEPGYRGTPGQSIPGLPGKDGKPGLDGAPGRKGENGLPGVRGPPGDSLNGLPGAPGQRGAPGPNGYDGRDGVNGLPGAPGTKGDRGGTCSACAPGTKGEKGLPGYSGQPGPQGDRGLPGMPGPVGDAGDDGLPGPAGRPGSPGPPGQDGFPGLPGQKGEPTQLTLRPGPPGYPGLKGENGFPGQPGVDGLPGPSGPVGPPGAPGYPGEKGDAGLPGLSGKPGQDGLPGLPGNKGEAGYGQPGQPGFPGAKGDGGLPGLPGTPGLQGMPGEPAPENQVNPAPPGQPGLPGLPGTKGEGGYPGRPGEVGQPGFPGLPGMKGDSGLPGPPGLPGHPGVPGDKGFGGVPGLPGIPGPKGDVGNPGLPGLNGQKGEPGVGVPGQPGSPGFPGLKGDAGLPGLPGTPGLEGQRGFPGAPGLKGGDGLPGLSGQPGYPGEKGDAGLPGVPGREGSPGFPGQDGLPGVPGMKGEDGLPGLPGVTGLKGDLGAPGQSGAPGLPGAPGYPGMKGNAGIPGVPGFKGDGGLPGLPGLNGPKGEPGVPGMPGTPGMKGNGGLPGLPGRDGLSGVPGMKGDRGFNGLPGEKGEAGPAARDGQKGDAGLPGQPGLRGPQGPSGLPGVPGFKGETGLPGYGQPGQPGEKGLPGIPGKAGRQGAPGSPGQDGLPGFPGMKGESGYPGQDGLPGRDGLPGVPGQKGDLGQSGQPGLSGAPGLDGQPGVPGIRGDKGQGGLPGIPGDRGMDGYPGQKGENGYPGQPGLPGLGGEKGFAGTPGFPGLKGSPGYPGQDGLPGIPGLKGDSGFPGQPGQEGLPGLSGEKGMGGLPGMPGQPGQSIAGPVGPPGAPGLQGKDGFPGLPGQKGESGLSGLPGAPGLKGESGMPGFPGAKGDLGANGIPGKRGEDGLPGVPGRDGQPGIPGLKGEVGGAGLPGQPGFPGIPGLKGEGGLPGFPGAKGEAGFPGTPGVPGYAGEKGDGGLPGLPGRDGLPGADGPVGPPGPSGPQNLVEPGEKGLPGLPGAPGLRGEKGMPGLDGPPGNDGPPGLPGQRGNDGYPGAPGLSGEKGMGGLPGFPGLDGQPGGPGAPGLPGAPGAAGPAYRDGFVLVKHSQTTEVPRCPEGQTKLWDGYSLLYIEGNEKSHNQDLGHAGSCLQRFSTMPFLFCDFNNVCNYASRNEKSYWLSTSEAIPMMPVNEREIEPYISRCAVCEAPANTIAVHSQTIQIPNCPAGWSSLWIGYSFAMHTGAGAEGGGQSPSSPGSCLEDFRATPFIECNGARGSCHYFANKFSFWLTTIDNDSEFKVPESQTLKSGNLRTRVSRCQVCVKSTDGRH.

Residues 1-26 form the signal peptide; that stretch reads MKQRAALGPVLRLAILALLAVSYVQS. A 7S domain region spans residues 27 to 42; it reads QATCRDCSNRGCFCVG. The segment at 42-1527 is triple-helical region; sequence GEKGSMGAPG…PGAPGAAGPA (1486 aa). Residues 47–62 show a composition bias toward low complexity; it reads MGAPGPQGPPGTQGIR. Disordered stretches follow at residues 47-943, 955-1304, 1316-1339, and 1367-1525; these read MGAP…GAPG, GVPG…GLPG, GFPG…DGLP, and GFPG…GAAG. Over residues 102 to 111 the composition is skewed to gly residues; sequence GNDGGNGRPG. Over residues 134-149 the composition is skewed to pro residues; the sequence is PGRPGPPGMPGFPGPP. A compositionally biased stretch (basic and acidic residues) spans 189–198; that stretch reads YPGEKGDRGD. Over residues 224 to 234 the composition is skewed to low complexity; that stretch reads PKGDPGDLGSV. Residue Ser-248 is glycosylated (O-linked (Xyl...) (glycosaminoglycan) serine). Residues 258–267 are compositionally biased toward basic and acidic residues; it reads PGEKGDKGEP. A compositionally biased stretch (gly residues) spans 268 to 283; that stretch reads GEGGQRGYPGNGGLSG. Pro residues predominate over residues 367-382; it reads PGPPGLPGRPGNPGPP. Positions 398–407 are enriched in gly residues; it reads GNTGGPGLPG. Low complexity-rich tracts occupy residues 408–417 and 429–439; these read YPGNEGLPGP and APGVSGPSGIP. A compositionally biased stretch (basic and acidic residues) spans 464–479; sequence KDGKPGLDGAPGRKGE. Low complexity-rich tracts occupy residues 495–509 and 568–584; these read GLPG…PGPN and PVGD…AGRP. The span at 638 to 648 shows a compositional bias: pro residues; the sequence is PSGPVGPPGAP. Gly residues-rich tracts occupy residues 693 to 702, 737 to 746, and 782 to 791; these read GAKGDGGLPG, GTKGEGGYPG, and GDKGFGGVPG. Residues 839 to 858 are compositionally biased toward low complexity; the sequence is LPGLPGTPGLEGQRGFPGAP. A compositionally biased stretch (gly residues) spans 859-868; that stretch reads GLKGGDGLPG. Residues 929–938 show a composition bias toward low complexity; the sequence is APGQSGAPGL. The span at 958–967 shows a compositional bias: gly residues; sequence GFKGDGGLPG. Residues 968-980 are compositionally biased toward low complexity; that stretch reads LPGLNGPKGEPGV. Positions 988–997 are enriched in gly residues; sequence GMKGNGGLPG. Over residues 1040–1056 the composition is skewed to low complexity; the sequence is LPGQPGLRGPQGPSGLP. Gly residues predominate over residues 1194-1203; sequence GLPGLGGEKG. Positions 1237 to 1250 are enriched in low complexity; it reads FPGQPGQEGLPGLS. Residues 1251-1260 are compositionally biased toward gly residues; that stretch reads GEKGMGGLPG. Over residues 1373-1382 the composition is skewed to gly residues; the sequence is GLKGEGGLPG. Low complexity-rich tracts occupy residues 1413–1425 and 1433–1454; these read LPGR…ADGP and GPQN…APGL. 2 stretches are compositionally biased toward gly residues: residues 1492 to 1501 and 1507 to 1516; these read GEKGMGGLPG and GQPGGPGAPG. Positions 1531–1754 constitute a Collagen IV NC1 domain; it reads GFVLVKHSQT…SRCQVCVKST (224 aa). 6 disulfides stabilise this stretch: Cys-1546-Cys-1635, Cys-1579-Cys-1632, Cys-1591-Cys-1597, Cys-1654-Cys-1750, Cys-1688-Cys-1747, and Cys-1700-Cys-1707.

The protein belongs to the type IV collagen family. Trimers of two alpha 1(IV) and one alpha 2(IV) chain. Type IV collagen forms a mesh-like network linked through intermolecular interactions between 7S domains and between NC1 domains. In terms of processing, prolines at the third position of the tripeptide repeating unit (G-X-Y) are hydroxylated in some or all of the chains. Post-translationally, type IV collagens contain numerous cysteine residues which are involved in inter- and intramolecular disulfide bonding. 12 of these, located in the NC1 domain, are conserved in all known type IV collagens. The trimeric structure of the NC1 domains is stabilized by covalent bonds between Lys and Met residues. As to expression, localizes to the basement membrane between distal tip cells and the germline. Localizes to the intestinal basement membrane.

It is found in the secreted. It localises to the extracellular space. The protein resides in the extracellular matrix. The protein localises to the basement membrane. Collagen type IV is specific for basement membranes. Together with fbl-1 and downstream of metalloprotease mig-17, recruits nidogen nid-1 to the gonad basement membrane thereby probably inducing basement membrane remodeling required for the directional migration of distal tip cells. Required to restrict presynaptic growth at the neuromuscular junctions in late larval stage and in adult motor neurons. Vital for embryonic development. In Caenorhabditis elegans, this protein is Collagen alpha-2(IV) chain.